Reading from the N-terminus, the 272-residue chain is Putative pyruvate, phosphate dikinase regulatory protein (272 aa).

154–161 (GVSRTSKS) is an ADP binding site.

This sequence belongs to the pyruvate, phosphate/water dikinase regulatory protein family. PDRP subfamily.

The enzyme catalyses N(tele)-phospho-L-histidyl/L-threonyl-[pyruvate, phosphate dikinase] + ADP = N(tele)-phospho-L-histidyl/O-phospho-L-threonyl-[pyruvate, phosphate dikinase] + AMP + H(+). It catalyses the reaction N(tele)-phospho-L-histidyl/O-phospho-L-threonyl-[pyruvate, phosphate dikinase] + phosphate + H(+) = N(tele)-phospho-L-histidyl/L-threonyl-[pyruvate, phosphate dikinase] + diphosphate. Bifunctional serine/threonine kinase and phosphorylase involved in the regulation of the pyruvate, phosphate dikinase (PPDK) by catalyzing its phosphorylation/dephosphorylation. This is Putative pyruvate, phosphate dikinase regulatory protein from Wolbachia pipientis subsp. Culex pipiens (strain wPip).